A 195-amino-acid polypeptide reads, in one-letter code: Probable nicotinate-nucleotide adenylyltransferase (195 aa).

It belongs to the NadD family.

It catalyses the reaction nicotinate beta-D-ribonucleotide + ATP + H(+) = deamido-NAD(+) + diphosphate. The protein operates within cofactor biosynthesis; NAD(+) biosynthesis; deamido-NAD(+) from nicotinate D-ribonucleotide: step 1/1. Catalyzes the reversible adenylation of nicotinate mononucleotide (NaMN) to nicotinic acid adenine dinucleotide (NaAD). The protein is Probable nicotinate-nucleotide adenylyltransferase of Opitutus terrae (strain DSM 11246 / JCM 15787 / PB90-1).